The chain runs to 302 residues: Actin maturation protease (302 aa).

Residues 1-26 (MPHTNEDPTAQQAGVILDPPPPLPPP) form a disordered region. Positions 85–205 (SLIQEGPQCG…WAVISGVLFG (121 aa)) are peptidase C39-like. C93 is a catalytic residue.

It belongs to the ACTMAP family.

It localises to the cytoplasm. The catalysed reaction is N-terminal N(alpha)-acetyl-L-methionyl-L-aspartyl-[protein] + H2O = N-terminal L-aspartyl-[protein] + N-acetyl-L-methionine. It catalyses the reaction N-terminal N(alpha)-acetyl-L-methionyl-L-glutamyl-[protein] + H2O = N-terminal L-glutamyl-[protein] + N-acetyl-L-methionine. The enzyme catalyses N-terminal N(alpha)-acetyl-L-cysteinyl-L-aspartyl-[protein] + H2O = N-terminal L-aspartyl-[protein] + N-acetyl-L-cysteine. It carries out the reaction N-terminal N(alpha)-acetyl-L-cysteinyl-L-glutamyl-[protein] + H2O = N-terminal L-glutamyl-[protein] + N-acetyl-L-cysteine. Its function is as follows. Actin maturation protease that specifically mediates the cleavage of immature acetylated N-terminal actin, thereby contributing to actin maturation. Cleaves N-terminal acetylated methionine of immature cytoplasmic beta- and gamma-actin after translation. Cleaves N-terminal acetylated cysteine of muscle alpha-actin after canonical removal of N-terminal methionine. The protein is Actin maturation protease of Xenopus tropicalis (Western clawed frog).